A 269-amino-acid polypeptide reads, in one-letter code: Imidazoleglycerol-phosphate dehydratase 1, chloroplastic (269 aa).

Disordered stretches follow at residues 1–31 (MTTA…GSGG) and 54–73 (SGVG…VSSR). The transit peptide at 1–52 (MTTAPFVSPSLPRLHSARASPFPKPSVGSGGGVAFPARTYGSSLRLRSAVMS) directs the protein to the chloroplast. Substrate is bound by residues E83, 109–117 (HMLDQLASH), 135–139 (HHSNE), R161, and R183. 4 residues coordinate Mn(2+): H109, H135, H136, and E139. Residues H207, H231, H232, and E235 each coordinate Mn(2+). Residues 231–239 (HHIIEATFK) and 261–263 (SSK) each bind substrate.

This sequence belongs to the imidazoleglycerol-phosphate dehydratase family. It depends on Mn(2+) as a cofactor.

The protein resides in the plastid. It localises to the chloroplast. It catalyses the reaction D-erythro-1-(imidazol-4-yl)glycerol 3-phosphate = 3-(imidazol-4-yl)-2-oxopropyl phosphate + H2O. It participates in amino-acid biosynthesis; L-histidine biosynthesis; L-histidine from 5-phospho-alpha-D-ribose 1-diphosphate: step 6/9. In Triticum aestivum (Wheat), this protein is Imidazoleglycerol-phosphate dehydratase 1, chloroplastic.